The primary structure comprises 447 residues: Asparagine--tRNA ligase (447 aa).

It belongs to the class-II aminoacyl-tRNA synthetase family. As to quaternary structure, homodimer.

It is found in the cytoplasm. It catalyses the reaction tRNA(Asn) + L-asparagine + ATP = L-asparaginyl-tRNA(Asn) + AMP + diphosphate + H(+). This chain is Asparagine--tRNA ligase, found in Lactococcus lactis subsp. lactis (strain IL1403) (Streptococcus lactis).